Reading from the N-terminus, the 629-residue chain is Dapper homolog 3 (629 aa).

Phosphoserine is present on S6. Disordered regions lie at residues 50 to 76 and 105 to 574; these read PGMGGAEAEDEEDADEDEDAAAARRAA and GGLE…GGLV. The segment covering 56-69 has biased composition (acidic residues); sequence EAEDEEDADEDEDA. Residues 63–87 are a coiled coil; that stretch reads ADEDEDAAAARRAAAALEEQLEALP. Positions 105-150 are enriched in low complexity; sequence GGLEQESGRSSGFYEDPSSTGGPDSPPSTFCGDSGFSGSSSYGRLG. S165 and S239 each carry phosphoserine. The residue at position 258 (R258) is an Omega-N-methylarginine. A compositionally biased stretch (basic and acidic residues) spans 301 to 311; it reads PAREPSLERVG. Low complexity predominate over residues 316–335; it reads SPAALSRAWASSWESEAAPE. Residues 336–348 show a composition bias toward pro residues; the sequence is PAAPPAAPSPPDS. Residues S426 and S478 each carry the phosphoserine modification. Residues 525-535 show a composition bias toward low complexity; the sequence is SAGRLGPLGRR. The segment covering 536 to 546 has biased composition (gly residues); it reads GPAGGVGGGYG. Over residues 547 to 568 the composition is skewed to low complexity; the sequence is ESESSASEGESPAFSSASSDSD. The short motif at 626–629 is the PDZ-binding element; sequence MTTV.

The protein belongs to the dapper family. As to quaternary structure, can form homodimers and heterodimers with DACT1 or DACT3. Interacts with CSNK1D, PKA catalytic subunit, PKC-type kinase, DVL1, DVL3, VANGL1, VANGL2 and CTNND1. Interacts with DVL2.

Its function is as follows. May be involved in regulation of intracellular signaling pathways during development. Specifically thought to play a role in canonical and/or non-canonical Wnt signaling pathways through interaction with DSH (Dishevelled) family proteins. This chain is Dapper homolog 3 (DACT3), found in Homo sapiens (Human).